The following is an 88-amino-acid chain: Small ribosomal subunit protein uS17 (88 aa).

The protein belongs to the universal ribosomal protein uS17 family. As to quaternary structure, part of the 30S ribosomal subunit.

In terms of biological role, one of the primary rRNA binding proteins, it binds specifically to the 5'-end of 16S ribosomal RNA. The polypeptide is Small ribosomal subunit protein uS17 (Marinobacter nauticus (strain ATCC 700491 / DSM 11845 / VT8) (Marinobacter aquaeolei)).